A 211-amino-acid polypeptide reads, in one-letter code: MSGTLVLVRHGQSDWNLKNLFTGWKDPDLTELGIQEANTGGAALAEYGIKFDVAYTSVLVRAQHTLKLILDKVGQPDLLTIRDQALNERDYGDLSGLNKDDARAKWGEEQVHIWRRSYDVPPPGGESLRDTGARVWPYYLTEILPRVLRGEKVLVAAHGNSLRSLVMVLDKLSREGVLALNLATGVPMVYKLKADSTVASKEVLGDMSGAH.

Substrate-binding positions include 9-16 (RHGQSDWN), 22-23 (TG), arginine 61, 88-91 (ERDY), lysine 99, 115-116 (RR), and 159-160 (GN). The Tele-phosphohistidine intermediate role is filled by histidine 10. The active-site Proton donor/acceptor is the glutamate 88.

This sequence belongs to the phosphoglycerate mutase family. BPG-dependent PGAM subfamily. Homodimer.

It catalyses the reaction (2R)-2-phosphoglycerate = (2R)-3-phosphoglycerate. The protein operates within carbohydrate degradation; glycolysis; pyruvate from D-glyceraldehyde 3-phosphate: step 3/5. Catalyzes the interconversion of 2-phosphoglycerate and 3-phosphoglycerate. The polypeptide is 2,3-bisphosphoglycerate-dependent phosphoglycerate mutase (Rhizobium johnstonii (strain DSM 114642 / LMG 32736 / 3841) (Rhizobium leguminosarum bv. viciae)).